Consider the following 197-residue polypeptide: Large ribosomal subunit protein uL5 (197 aa).

This sequence belongs to the universal ribosomal protein uL5 family. Part of the 50S ribosomal subunit; contacts the 5S rRNA and probably tRNA. Forms a bridge to the 30S subunit in the 70S ribosome.

This is one of the proteins that bind and probably mediate the attachment of the 5S RNA into the large ribosomal subunit, where it forms part of the central protuberance. In the 70S ribosome it contacts protein S13 of the 30S subunit (bridge B1b), connecting the 2 subunits; this bridge is implicated in subunit movement. May contact the P site tRNA; the 5S rRNA and some of its associated proteins might help stabilize positioning of ribosome-bound tRNAs. The polypeptide is Large ribosomal subunit protein uL5 (Caldivirga maquilingensis (strain ATCC 700844 / DSM 13496 / JCM 10307 / IC-167)).